We begin with the raw amino-acid sequence, 1250 residues long: DNA-directed RNA polymerase subunit beta'' (1250 aa).

4 residues coordinate Zn(2+): C224, C314, C321, and C324.

This sequence belongs to the RNA polymerase beta' chain family. RpoC2 subfamily. In terms of assembly, in plastids the minimal PEP RNA polymerase catalytic core is composed of four subunits: alpha, beta, beta', and beta''. When a (nuclear-encoded) sigma factor is associated with the core the holoenzyme is formed, which can initiate transcription. The cofactor is Zn(2+).

It localises to the plastid. Its subcellular location is the chloroplast. The enzyme catalyses RNA(n) + a ribonucleoside 5'-triphosphate = RNA(n+1) + diphosphate. Functionally, DNA-dependent RNA polymerase catalyzes the transcription of DNA into RNA using the four ribonucleoside triphosphates as substrates. In Staurastrum punctulatum (Green alga), this protein is DNA-directed RNA polymerase subunit beta''.